A 393-amino-acid chain; its full sequence is Branched-chain amino acid aminotransferase 1, mitochondrial (393 aa).

Residues 1-34 (MIHRGLWLHNLVQSYRVGSSSSSSTLFKLVYRYN) constitute a mitochondrion transit peptide. Pyridoxal 5'-phosphate is bound at residue Arg138. Residue Lys240 is the Proton acceptor of the active site. N6-(pyridoxal phosphate)lysine is present on Lys240. Glu276 is a pyridoxal 5'-phosphate binding site.

The protein belongs to the class-IV pyridoxal-phosphate-dependent aminotransferase family. Requires pyridoxal 5'-phosphate as cofactor. As to expression, expressed specifically in lupulin glands.

The protein resides in the mitochondrion. The enzyme catalyses L-isoleucine + 2-oxoglutarate = (S)-3-methyl-2-oxopentanoate + L-glutamate. The catalysed reaction is L-leucine + 2-oxoglutarate = 4-methyl-2-oxopentanoate + L-glutamate. It catalyses the reaction L-valine + 2-oxoglutarate = 3-methyl-2-oxobutanoate + L-glutamate. Its pathway is amino-acid biosynthesis; L-isoleucine biosynthesis; L-isoleucine from 2-oxobutanoate: step 4/4. It functions in the pathway amino-acid biosynthesis; L-leucine biosynthesis; L-leucine from 3-methyl-2-oxobutanoate: step 4/4. It participates in amino-acid biosynthesis; L-valine biosynthesis; L-valine from pyruvate: step 4/4. Converts 2-oxo acids to branched-chain amino acids (BCAA). Shows no kinetic preferences corresponding to anabolic or catabolic functions, but likely involved in BCAA catabolism. The sequence is that of Branched-chain amino acid aminotransferase 1, mitochondrial from Humulus lupulus (European hop).